A 457-amino-acid chain; its full sequence is L-lysine-epsilon aminotransferase (457 aa).

Positions 131 and 132 each coordinate pyridoxal 5'-phosphate. Residues Arg-172 and Gln-278 each contribute to the 2-oxoglutarate site. An L-lysine-binding site is contributed by Arg-172. Gln-278 lines the pyridoxal 5'-phosphate pocket. Position 304 is an N6-(pyridoxal phosphate)lysine (Lys-304). Arg-427 is a binding site for 2-oxoglutarate.

It belongs to the class-III pyridoxal-phosphate-dependent aminotransferase family. As to quaternary structure, monomer. It depends on pyridoxal 5'-phosphate as a cofactor.

It catalyses the reaction L-lysine + 2-oxoglutarate = (S)-2-amino-6-oxohexanoate + L-glutamate. The protein operates within antibiotic biosynthesis; cephamycin C biosynthesis. Activity is induced in the presence of high concentrations of lysine, but not by L-alpha-aminoadipic acid. Not repressed by ammonium ions. In terms of biological role, catalyzes the transfer of the terminal amino group of L-lysine to alpha-ketoglutarate to yield L-glutamate and 2-aminoadipate 6-semialdehyde ((S)-2-amino-6-oxohexanoate), which is spontaneously converted to the dehydrated form 1-piperideine 6-carboxylate. Shows a high specificity for L-lysine as substrate although L-ornithine can also be used, leading to the formation of an o-aminobenzaldehyde reactive compound. Only cis-oxaloacetate and pyruvate can replace alpha-ketoglutarate, but with very low efficiency. The chain is L-lysine-epsilon aminotransferase from Streptomyces clavuligerus.